A 384-amino-acid polypeptide reads, in one-letter code: Gibberellin 3-beta-dioxygenase 1 (384 aa).

Positions 225–327 (TLTSTIHLNM…RISMPYFLGP (103 aa)) constitute a Fe2OG dioxygenase domain. Residues His250, Asp252, and His308 each contribute to the Fe cation site. 2-oxoglutarate is bound by residues Arg318 and Ser320.

This sequence belongs to the iron/ascorbate-dependent oxidoreductase family. The cofactor is L-ascorbate. Requires Fe(2+) as cofactor. As to expression, expressed in unopened flowers.

The catalysed reaction is gibberellin A20 + 2-oxoglutarate + O2 = gibberellin A1 + succinate + CO2. The protein operates within plant hormone biosynthesis; gibberellin biosynthesis. Functionally, catalyzes the 3-beta-hydroxylation of the inactive gibberellin precursors, leading to the formation of bioactive gibberellins. In vitro, converts the precursors GA20, GA5, GA44 and GA9 to the corresponding 3-beta-hydroxylated bioactive products GA1, GA3, GA38 and GA4, respectively. Involved in the production of bioactive GA for vegetative growth and development. May possess 2,3-desaturase activity, catalyzing the conversion of GA9 to 2,3-dehydro-GA9, and GA20 to GA5 (2,3-dehydro GA20). May possess 2-beta-hydroxylase activity, catalyzing the conversion of GA1 and GA4 to the corresponding 2-beta-hydroxylated products GA8 and GA34, respectively. The chain is Gibberellin 3-beta-dioxygenase 1 from Oryza sativa subsp. japonica (Rice).